Consider the following 209-residue polypeptide: Uracil phosphoribosyltransferase (209 aa).

Residues Arg-79, Arg-104, and 131-139 contribute to the 5-phospho-alpha-D-ribose 1-diphosphate site; that span reads DPMLATGGS. Residues Ile-194 and 199–201 each bind uracil; that span reads GDA. Residue Asp-200 participates in 5-phospho-alpha-D-ribose 1-diphosphate binding.

It belongs to the UPRTase family. It depends on Mg(2+) as a cofactor.

The enzyme catalyses UMP + diphosphate = 5-phospho-alpha-D-ribose 1-diphosphate + uracil. Its pathway is pyrimidine metabolism; UMP biosynthesis via salvage pathway; UMP from uracil: step 1/1. With respect to regulation, allosterically activated by GTP. In terms of biological role, catalyzes the conversion of uracil and 5-phospho-alpha-D-ribose 1-diphosphate (PRPP) to UMP and diphosphate. This chain is Uracil phosphoribosyltransferase, found in Clostridioides difficile (strain 630) (Peptoclostridium difficile).